Here is a 164-residue protein sequence, read N- to C-terminus: Lipoprotein signal peptidase (164 aa).

The next 3 helical transmembrane spans lie at 12–32 (WLWL…LILQ), 70–90 (WFFA…MYRS), and 102–122 (ALII…GFVV). Catalysis depends on residues Asp-123 and Asp-141. A helical membrane pass occupies residues 137 to 157 (FNLADTAICVGAALIVLEGFL).

This sequence belongs to the peptidase A8 family.

It is found in the cell inner membrane. The enzyme catalyses Release of signal peptides from bacterial membrane prolipoproteins. Hydrolyzes -Xaa-Yaa-Zaa-|-(S,diacylglyceryl)Cys-, in which Xaa is hydrophobic (preferably Leu), and Yaa (Ala or Ser) and Zaa (Gly or Ala) have small, neutral side chains.. Its pathway is protein modification; lipoprotein biosynthesis (signal peptide cleavage). Functionally, this protein specifically catalyzes the removal of signal peptides from prolipoproteins. The chain is Lipoprotein signal peptidase from Escherichia coli O6:K15:H31 (strain 536 / UPEC).